A 287-amino-acid chain; its full sequence is ATP synthase gamma chain (287 aa).

This sequence belongs to the ATPase gamma chain family. As to quaternary structure, F-type ATPases have 2 components, CF(1) - the catalytic core - and CF(0) - the membrane proton channel. CF(1) has five subunits: alpha(3), beta(3), gamma(1), delta(1), epsilon(1). CF(0) has three main subunits: a, b and c.

It localises to the cell inner membrane. Its function is as follows. Produces ATP from ADP in the presence of a proton gradient across the membrane. The gamma chain is believed to be important in regulating ATPase activity and the flow of protons through the CF(0) complex. This chain is ATP synthase gamma chain, found in Enterobacter sp. (strain 638).